Here is a 153-residue protein sequence, read N- to C-terminus: Transcriptional repressor NrdR (153 aa).

Residues 3-34 fold into a zinc finger; it reads CPFCAHDDSQVKDSRPAEDNAAIRRRRQCSKC. In terms of domain architecture, ATP-cone spans 49-139; sequence VTVVKSDDKR…VYRDFSEARD (91 aa).

This sequence belongs to the NrdR family. Zn(2+) is required as a cofactor.

Its function is as follows. Negatively regulates transcription of bacterial ribonucleotide reductase nrd genes and operons by binding to NrdR-boxes. The sequence is that of Transcriptional repressor NrdR from Erythrobacter litoralis (strain HTCC2594).